The following is a 292-amino-acid chain: Putative pyruvate, phosphate dikinase regulatory protein (292 aa).

Residue 155 to 162 (GVSRSSKT) coordinates ADP.

Belongs to the pyruvate, phosphate/water dikinase regulatory protein family. PDRP subfamily.

It catalyses the reaction N(tele)-phospho-L-histidyl/L-threonyl-[pyruvate, phosphate dikinase] + ADP = N(tele)-phospho-L-histidyl/O-phospho-L-threonyl-[pyruvate, phosphate dikinase] + AMP + H(+). The enzyme catalyses N(tele)-phospho-L-histidyl/O-phospho-L-threonyl-[pyruvate, phosphate dikinase] + phosphate + H(+) = N(tele)-phospho-L-histidyl/L-threonyl-[pyruvate, phosphate dikinase] + diphosphate. Functionally, bifunctional serine/threonine kinase and phosphorylase involved in the regulation of the pyruvate, phosphate dikinase (PPDK) by catalyzing its phosphorylation/dephosphorylation. The protein is Putative pyruvate, phosphate dikinase regulatory protein of Acidiphilium cryptum (strain JF-5).